We begin with the raw amino-acid sequence, 365 residues long: Aspartate-semialdehyde dehydrogenase (365 aa).

Thr-13, Gly-14, Ser-15, Val-16, Ser-38, Ser-41, Leu-85, and Asp-86 together coordinate NADP(+). A Phosphothreonine modification is found at Thr-13. Cys-156 acts as the Acyl-thioester intermediate in catalysis. An NADP(+)-binding site is contributed by Gly-188. The Proton acceptor role is filled by His-256. Phosphoserine occurs at positions 318 and 323. Asn-343 serves as a coordination point for NADP(+).

The protein belongs to the aspartate-semialdehyde dehydrogenase family. Homotetramer.

It is found in the cytoplasm. Its subcellular location is the cytosol. It localises to the nucleus. It catalyses the reaction L-aspartate 4-semialdehyde + phosphate + NADP(+) = 4-phospho-L-aspartate + NADPH + H(+). It participates in amino-acid biosynthesis; L-methionine biosynthesis via de novo pathway; L-homoserine from L-aspartate: step 2/3. Its pathway is amino-acid biosynthesis; L-threonine biosynthesis; L-threonine from L-aspartate: step 2/5. Its function is as follows. Catalyzes the NADPH-dependent formation of L-aspartate 4-semialdehyde (L-ASA) by the reductive dephosphorylation of 4-phospho-L-aspartate. Mediates the second step in the biosynthesis of amino acids that derive from aspartate (the aspartate family of amino acids), including methioinine and threonine, the latter of which is a precursor to isoleucine. This is Aspartate-semialdehyde dehydrogenase (HOM2) from Saccharomyces cerevisiae (strain ATCC 204508 / S288c) (Baker's yeast).